Here is a 385-residue protein sequence, read N- to C-terminus: MVKYISILGSTGSIGTSALDVVSAHPEHFKIVGLTANYNIDLLEQQIKTFQPRIVSVATKDLADKLRTRISANTKITHGTDGFIAVATHPDSNLVLSSVVGVSGLLPTIEALKAKKDIAIANKETLVAAGHIVTELAKQNGCRLIPVDSEHSAIFQCLKGENNKEIEKLIVTASGGAFRDKTRDEMQTLQAKDALKHPNWLMGAKLTIDSATLMNKGFEVMEARWLFDIPYKKINVMIHKESIIHSLVEFIDGSVMAQLGAPDMRMPIQYAFHYPTRLPSSYEKLNLLEIGSLHFEKPDLEKFPCLQYAYECGKIGGTTPAVLNAANEIANALFLKNEIAFFDIEKTIYKTVEAHHNVKDPSLDAILEADQWARQYANELLIKKR.

NADPH contacts are provided by Thr11, Gly12, Ser13, Ile14, Asn39, and Asn122. Position 123 (Lys123) interacts with 1-deoxy-D-xylulose 5-phosphate. Glu124 serves as a coordination point for NADPH. Asp148 serves as a coordination point for Mn(2+). 1-deoxy-D-xylulose 5-phosphate-binding residues include Ser149, Glu150, Ser174, and His197. Glu150 provides a ligand contact to Mn(2+). An NADPH-binding site is contributed by Gly203. The 1-deoxy-D-xylulose 5-phosphate site is built by Ser210, Asn215, Lys216, and Glu219. Glu219 contributes to the Mn(2+) binding site.

It belongs to the DXR family. Requires Mg(2+) as cofactor. It depends on Mn(2+) as a cofactor.

The catalysed reaction is 2-C-methyl-D-erythritol 4-phosphate + NADP(+) = 1-deoxy-D-xylulose 5-phosphate + NADPH + H(+). The protein operates within isoprenoid biosynthesis; isopentenyl diphosphate biosynthesis via DXP pathway; isopentenyl diphosphate from 1-deoxy-D-xylulose 5-phosphate: step 1/6. Functionally, catalyzes the NADPH-dependent rearrangement and reduction of 1-deoxy-D-xylulose-5-phosphate (DXP) to 2-C-methyl-D-erythritol 4-phosphate (MEP). This Bacillus cereus (strain ATCC 14579 / DSM 31 / CCUG 7414 / JCM 2152 / NBRC 15305 / NCIMB 9373 / NCTC 2599 / NRRL B-3711) protein is 1-deoxy-D-xylulose 5-phosphate reductoisomerase 1.